The primary structure comprises 662 residues: Polyunsaturated fatty acid (12S)/(13S)-lipoxygenase, epidermal-type (662 aa).

The 113-residue stretch at 2 to 114 (VKYKILVATG…TICLTEGTAL (113 aa)) folds into the PLAT domain. Positions 115–662 (KVTDDTQNLF…PSLVENSVTI (548 aa)) constitute a Lipoxygenase domain. The Fe cation site is built by His360, His365, His540, and Ile662.

This sequence belongs to the lipoxygenase family. Requires Fe cation as cofactor. In terms of tissue distribution, expressed in epidermis.

Its subcellular location is the cytoplasm. The enzyme catalyses (5Z,8Z,11Z,14Z)-eicosatetraenoate + O2 = (12S)-hydroperoxy-(5Z,8Z,10E,14Z)-eicosatetraenoate. It carries out the reaction 1-O-methyl-(9Z,12Z)-octadecadienoate + O2 = 1-O-methyl-(13S)-hydroperoxy-(9Z,11E)-octadecadienoate. The catalysed reaction is (8Z,11Z,14Z)-eicosatrienoate + O2 = (12S)-hydroperoxy-(8Z,10E,14Z)-eicosatrienoate. It catalyses the reaction (5Z,8Z,11Z)-eicosatrienoate + O2 = (12S)-hydroperoxy-(5Z,8Z,10E)-eicosatrienoate. The enzyme catalyses 1-O-methyl-(5Z,8Z,11Z,14Z)-eicosatetraenoate + O2 = 1-O-methyl-(12S)-hydroperoxy-(5Z,8Z,10E,14Z)-eicosatetraenoate. It carries out the reaction (9Z,12Z)-octadecadienoate + O2 = (13S)-hydroperoxy-(9Z,11E)-octadecadienoate. The catalysed reaction is (4Z,7Z,10Z,13Z,16Z,19Z)-docosahexaenoate + O2 = (14S)-hydroperoxy-(4Z,7Z,10Z,12E,16Z,19Z)-docosahexaenoate. Its pathway is lipid metabolism; hydroperoxy eicosatetraenoic acid biosynthesis. Arachidonate 12-lipoxygenase activity is decreased when the pH decreases from 7.4 to 6.0. Its function is as follows. Catalyzes the regio and stereo-specific incorporation of a single molecule of dioxygen into free and esterified polyunsaturated fatty acids generating lipid hydroperoxides that can be further reduced to the corresponding hydroxy species. Shows increasing catalytic activity within the series arachidonic acid &lt; 5,8,11-eicosatrienoic acid &lt; linoleic acid &lt; 8,11,14-eicosatrienoic acid. This is Polyunsaturated fatty acid (12S)/(13S)-lipoxygenase, epidermal-type from Mus musculus (Mouse).